Here is a 763-residue protein sequence, read N- to C-terminus: Protein translocase subunit SecA 2 (763 aa).

ATP contacts are provided by residues glutamine 83, 101–105 (GEGKT), and aspartate 490.

Belongs to the SecA family. As to quaternary structure, monomer and homodimer. Part of the essential Sec protein translocation apparatus which comprises SecA, SecYEG and auxiliary proteins SecDF. Other proteins may also be involved.

It is found in the cell membrane. It localises to the cytoplasm. The catalysed reaction is ATP + H2O + cellular proteinSide 1 = ADP + phosphate + cellular proteinSide 2.. Functionally, part of the Sec protein translocase complex. Interacts with the SecYEG preprotein conducting channel. Has a central role in coupling the hydrolysis of ATP to the transfer of proteins into and across the cell membrane, serving as an ATP-driven molecular motor driving the stepwise translocation of polypeptide chains across the membrane. The chain is Protein translocase subunit SecA 2 from Corynebacterium glutamicum (strain R).